The chain runs to 265 residues: 4-hydroxy-tetrahydrodipicolinate reductase (265 aa).

NAD(+) contacts are provided by residues 7–12 and Asp33; that span reads GASGRM. Arg34 is a binding site for NADP(+). Residues 96 to 98 and 120 to 123 contribute to the NAD(+) site; these read GTT and AANM. His153 functions as the Proton donor/acceptor in the catalytic mechanism. (S)-2,3,4,5-tetrahydrodipicolinate is bound at residue His154. The active-site Proton donor is the Lys157. 163–164 is a binding site for (S)-2,3,4,5-tetrahydrodipicolinate; that stretch reads GT.

It belongs to the DapB family.

The protein resides in the cytoplasm. It catalyses the reaction (S)-2,3,4,5-tetrahydrodipicolinate + NAD(+) + H2O = (2S,4S)-4-hydroxy-2,3,4,5-tetrahydrodipicolinate + NADH + H(+). It carries out the reaction (S)-2,3,4,5-tetrahydrodipicolinate + NADP(+) + H2O = (2S,4S)-4-hydroxy-2,3,4,5-tetrahydrodipicolinate + NADPH + H(+). It functions in the pathway amino-acid biosynthesis; L-lysine biosynthesis via DAP pathway; (S)-tetrahydrodipicolinate from L-aspartate: step 4/4. Functionally, catalyzes the conversion of 4-hydroxy-tetrahydrodipicolinate (HTPA) to tetrahydrodipicolinate. The chain is 4-hydroxy-tetrahydrodipicolinate reductase from Burkholderia multivorans (strain ATCC 17616 / 249).